The following is a 20-amino-acid chain: Insulin-like growth factor-binding protein 2 (20 aa).

An IGFBP N-terminal domain is found at 2-20; that stretch reads LVFYCPKCTAERQTACPKL.

In terms of assembly, binds IGF2 more than IGF1. Post-translationally, N-glycosylated.

The protein localises to the secreted. Inhibits IGF-mediated growth and developmental rates. IGF-binding proteins prolong the half-life of the IGFs and have been shown to either inhibit or stimulate the growth promoting effects of the IGFs on cell culture. They alter the interaction of IGFs with their cell surface receptors. This chain is Insulin-like growth factor-binding protein 2 (igfbp2), found in Oncorhynchus tshawytscha (Chinook salmon).